The following is a 395-amino-acid chain: Probable hercynylcysteine sulfoxide lyase (395 aa).

Positions 1 to 21 (MQDEAMRRSGANSPAGDSLAD) are disordered. The residue at position 220 (Lys-220) is an N6-(pyridoxal phosphate)lysine.

This sequence belongs to the class-V pyridoxal-phosphate-dependent aminotransferase family. EgtE subfamily. Requires pyridoxal 5'-phosphate as cofactor.

The catalysed reaction is S-(hercyn-2-yl)-L-cysteine S-oxide + AH2 + H(+) = ergothioneine + pyruvate + A + NH4(+). It functions in the pathway amino-acid biosynthesis; ergothioneine biosynthesis. Probably catalyzes the conversion of hercynylcysteine sulfoxide to ergothioneine. ERG is one of the major redox buffers which protects bacteria against redox stressors and antibiotics; loss of ERG or mycothiol (MSH, the other major redox buffer in this bacteria) leads to respiratory alterations and bioenergetic deficiencies that negatively impact virulence. This Mycobacterium tuberculosis (strain CDC 1551 / Oshkosh) protein is Probable hercynylcysteine sulfoxide lyase.